Consider the following 166-residue polypeptide: MKFALVLLGICAFYLVNATGDLETELEASELQELQEALDLIGETSLESLEAEELEEARKFKWGKLFSAAKKLYKKGKKLSKNKNFKKALKFGKQLAKNLQAGEEHEPGTPVGNNKCWAIGTTCSDDCDCCPEHHCHCPAGKWLPGLFRCTCQVTESDKVNKCPPAE.

The signal sequence occupies residues 1–18; that stretch reads MKFALVLLGICAFYLVNA. Positions 19–58 are cleaved as a propeptide — removed in mature form; it reads TGDLETELEASELQELQEALDLIGETSLESLEAEELEEAR. The tract at residues 59–99 is linear cationic cytotoxin domain; sequence KFKWGKLFSAAKKLYKKGKKLSKNKNFKKALKFGKQLAKNL. The 54-residue stretch at 113–166 folds into the Oxytoxin-type inhibitor cystine knot (ICK) domain; it reads NNKCWAIGTTCSDDCDCCPEHHCHCPAGKWLPGLFRCTCQVTESDKVNKCPPAE. Cystine bridges form between cysteine 116–cysteine 130, cysteine 123–cysteine 135, cysteine 127–cysteine 162, cysteine 129–cysteine 151, and cysteine 137–cysteine 149.

Belongs to the spiderine family. Cationic/spiderine subfamily. Expressed by the venom gland.

Its subcellular location is the secreted. Its function is as follows. Has antimicrobial, insecticidal, cytolytic and cytotoxic activity. This Oxyopes takobius (Lynx spider) protein is Spiderine-1b.